Here is a 214-residue protein sequence, read N- to C-terminus: Osteoclast-stimulating factor 1 (214 aa).

Ser-2 carries the N-acetylserine modification. In terms of domain architecture, SH3 spans 12–71 (GQVKVFRALYTFEPRTPDELYFEEGDIIYITDMSDTNWWKGTSKGRTGLIPSNYVAEQAE). 3 ANK repeats span residues 72–101 (SIDNPLHEAAKRGNLSWLRECLDNRVGVNG), 105–135 (AGSTALYWACHGGHKDIVDMLFTQPNIELNQ), and 139–168 (LGDTALHAAAWKGYADIVQLLLAKGARTDL). Phosphothreonine is present on Thr-200. Residues Ser-202 and Ser-213 each carry the phosphoserine modification.

In terms of assembly, interacts with SRC and SMN1. Interacts with FASLG.

It localises to the cytoplasm. Induces bone resorption, acting probably through a signaling cascade which results in the secretion of factor(s) enhancing osteoclast formation and activity. This Sus scrofa (Pig) protein is Osteoclast-stimulating factor 1 (OSTF1).